A 142-amino-acid chain; its full sequence is Hemoglobin subunit beta-1 (142 aa).

Residues 2 to 142 form the Globin domain; sequence SLTDEEIRLI…VTEALSCQYH (141 aa). Residues H59 and H88 each coordinate heme b.

Belongs to the globin family. As to quaternary structure, heterotetramer of two alpha chains and two beta chains. As to expression, red blood cells.

Involved in oxygen transport from the lung to the various peripheral tissues. The polypeptide is Hemoglobin subunit beta-1 (HBB1) (Torpedo marmorata (Marbled electric ray)).